A 362-amino-acid chain; its full sequence is Endolytic peptidoglycan transglycosylase RlpA (362 aa).

Residues 1-17 (MRKQWLGICIAAGMLAA) form the signal peptide. A lipid anchor (N-palmitoyl cysteine) is attached at Cys-18. Cys-18 carries the S-diacylglycerol cysteine lipid modification. The segment at 198-276 (PDLSGGAGTS…PSTTPATSPA (79 aa)) is disordered. Residues 262 to 276 (PVVTAPSTTPATSPA) are compositionally biased toward low complexity. The region spanning 285–361 (QSASGNFMVQ…AQLQSFITTA (77 aa)) is the SPOR domain.

The protein belongs to the RlpA family.

The protein resides in the cell membrane. In terms of biological role, lytic transglycosylase with a strong preference for naked glycan strands that lack stem peptides. This is Endolytic peptidoglycan transglycosylase RlpA from Escherichia coli O157:H7.